A 472-amino-acid chain; its full sequence is Selenium-binding protein 2 (472 aa).

A Phosphoserine modification is found at S467.

It belongs to the selenium-binding protein family. The N-terminus is blocked. As to expression, mainly expressed in liver.

The protein resides in the nucleus. It localises to the cytoplasm. Its subcellular location is the cytosol. The protein localises to the membrane. Functionally, selenium- and acetaminophen-binding protein which may be involved in the sensing of reactive xenobiotics in the cytoplasm. May be involved in intra-Golgi protein transport. This chain is Selenium-binding protein 2 (Selenbp2), found in Mus musculus (Mouse).